The chain runs to 399 residues: Argininosuccinate synthase (399 aa).

9–17 lines the ATP pocket; the sequence is AYSGGLDTS. Tyrosine 88 is an L-citrulline binding site. Glycine 118 contacts ATP. Positions 120, 124, and 125 each coordinate L-aspartate. Asparagine 124 serves as a coordination point for L-citrulline. L-citrulline contacts are provided by arginine 128, serine 176, glutamate 261, and tyrosine 273.

Belongs to the argininosuccinate synthase family. Type 1 subfamily. In terms of assembly, homotetramer.

It localises to the cytoplasm. The enzyme catalyses L-citrulline + L-aspartate + ATP = 2-(N(omega)-L-arginino)succinate + AMP + diphosphate + H(+). It participates in amino-acid biosynthesis; L-arginine biosynthesis; L-arginine from L-ornithine and carbamoyl phosphate: step 2/3. The protein is Argininosuccinate synthase of Mycobacterium leprae (strain TN).